The primary structure comprises 131 residues: Global transcriptional regulator Spx (131 aa).

C10 and C13 form a disulfide bridge.

It belongs to the ArsC family. Spx subfamily. Interacts with the C-terminal domain of the alpha subunit of the RNAP.

It is found in the cytoplasm. Functionally, global transcriptional regulator that plays a key role in stress response and exerts either positive or negative regulation of genes. Acts by interacting with the C-terminal domain of the alpha subunit of the RNA polymerase (RNAP). This interaction can enhance binding of RNAP to the promoter region of target genes and stimulate their transcription, or block interaction of RNAP with activator. The protein is Global transcriptional regulator Spx of Staphylococcus haemolyticus (strain JCSC1435).